A 235-amino-acid chain; its full sequence is Pyridoxine 5'-phosphate synthase (235 aa).

Asparagine 7 contacts 3-amino-2-oxopropyl phosphate. 9–10 contributes to the 1-deoxy-D-xylulose 5-phosphate binding site; that stretch reads DH. Arginine 18 contributes to the 3-amino-2-oxopropyl phosphate binding site. Histidine 43 (proton acceptor) is an active-site residue. 1-deoxy-D-xylulose 5-phosphate is bound by residues arginine 45 and histidine 50. The active-site Proton acceptor is the glutamate 70. Threonine 100 provides a ligand contact to 1-deoxy-D-xylulose 5-phosphate. The active-site Proton donor is the histidine 187. 3-amino-2-oxopropyl phosphate-binding positions include glycine 188 and 209–210; that span reads GH.

The protein belongs to the PNP synthase family. In terms of assembly, homooctamer; tetramer of dimers.

The protein resides in the cytoplasm. The catalysed reaction is 3-amino-2-oxopropyl phosphate + 1-deoxy-D-xylulose 5-phosphate = pyridoxine 5'-phosphate + phosphate + 2 H2O + H(+). It functions in the pathway cofactor biosynthesis; pyridoxine 5'-phosphate biosynthesis; pyridoxine 5'-phosphate from D-erythrose 4-phosphate: step 5/5. Functionally, catalyzes the complicated ring closure reaction between the two acyclic compounds 1-deoxy-D-xylulose-5-phosphate (DXP) and 3-amino-2-oxopropyl phosphate (1-amino-acetone-3-phosphate or AAP) to form pyridoxine 5'-phosphate (PNP) and inorganic phosphate. The protein is Pyridoxine 5'-phosphate synthase of Desulfatibacillum aliphaticivorans.